A 568-amino-acid polypeptide reads, in one-letter code: Potassium-transporting ATPase potassium-binding subunit (568 aa).

The next 12 membrane-spanning stretches (helical) occupy residues 7-27 (ITIG…GGFL), 65-85 (HYAL…YAIL), 136-156 (GLTV…AAII), 179-199 (LYVL…EGIP), 254-274 (LTNF…TNVF), 285-305 (WAVF…VYWA), 332-352 (FGVA…CGAV), 354-374 (AMHE…MMLG), 377-397 (IIGG…IAVF), 423-443 (MLAV…AVVV), 487-507 (ITLG…ALAI), and 530-550 (LFIG…FLPA).

The protein belongs to the KdpA family. As to quaternary structure, the system is composed of three essential subunits: KdpA, KdpB and KdpC.

It localises to the cell inner membrane. Part of the high-affinity ATP-driven potassium transport (or Kdp) system, which catalyzes the hydrolysis of ATP coupled with the electrogenic transport of potassium into the cytoplasm. This subunit binds the periplasmic potassium ions and delivers the ions to the membrane domain of KdpB through an intramembrane tunnel. In Granulibacter bethesdensis (strain ATCC BAA-1260 / CGDNIH1), this protein is Potassium-transporting ATPase potassium-binding subunit.